The chain runs to 121 residues: Large ribosomal subunit protein bL20 (121 aa).

This sequence belongs to the bacterial ribosomal protein bL20 family.

Its function is as follows. Binds directly to 23S ribosomal RNA and is necessary for the in vitro assembly process of the 50S ribosomal subunit. It is not involved in the protein synthesizing functions of that subunit. This chain is Large ribosomal subunit protein bL20, found in Mycoplasma mycoides subsp. mycoides SC (strain CCUG 32753 / NCTC 10114 / PG1).